A 416-amino-acid chain; its full sequence is MKIYLVGGAVRDSLLNLPIKDKDYLVVGATPEQMLQLGYRQVGKDFPVFLHPKNQQEYALARTERKIALGYGGFSCHASPDVTLEQDLLRRDLTINAIAQDEKGNLYDPFNGIEDINARLLRHVSDAFVEDPLRVLRVARFAARFHALGFHIAAETLALMRQISASDELNALTAERVWQEVDKSLGGPHPEVFFEVLHQCGALEVLFPEIFALFGVPQPEKWHPEIDTGVHTLMVLAQAALLTEDKSVRFAALVHDLGKALSPKEHLPKHHGHGQKGLPLIKALCTRLRVPNETRDLALLVSDQHQNVHQAFELRAETIVKIFDKADFWRKPERLTQLILACTADMRGRTGFENNPYPQGEYLTQCFLAANNVDIAAIIAAGFQGAEIKQALNLRRIEAVSQFKQKMQTKLPTDEQ.

Positions 8 and 11 each coordinate ATP. The CTP site is built by G8 and R11. 2 residues coordinate Mg(2+): D21 and D23. ATP is bound by residues R91, R137, and R140. The CTP site is built by R91, R137, and R140. An HD domain is found at 228–329 (TGVHTLMVLA…VKIFDKADFW (102 aa)).

The protein belongs to the tRNA nucleotidyltransferase/poly(A) polymerase family. Bacterial CCA-adding enzyme type 1 subfamily. Monomer. Can also form homodimers and oligomers. It depends on Mg(2+) as a cofactor. The cofactor is Ni(2+).

The enzyme catalyses a tRNA precursor + 2 CTP + ATP = a tRNA with a 3' CCA end + 3 diphosphate. The catalysed reaction is a tRNA with a 3' CCA end + 2 CTP + ATP = a tRNA with a 3' CCACCA end + 3 diphosphate. Functionally, catalyzes the addition and repair of the essential 3'-terminal CCA sequence in tRNAs without using a nucleic acid template. Adds these three nucleotides in the order of C, C, and A to the tRNA nucleotide-73, using CTP and ATP as substrates and producing inorganic pyrophosphate. tRNA 3'-terminal CCA addition is required both for tRNA processing and repair. Also involved in tRNA surveillance by mediating tandem CCA addition to generate a CCACCA at the 3' terminus of unstable tRNAs. While stable tRNAs receive only 3'-terminal CCA, unstable tRNAs are marked with CCACCA and rapidly degraded. The polypeptide is Multifunctional CCA protein (Shewanella baltica (strain OS195)).